The sequence spans 194 residues: ATP-dependent Clp protease proteolytic subunit (194 aa).

Serine 98 acts as the Nucleophile in catalysis. Histidine 123 is an active-site residue.

It belongs to the peptidase S14 family. As to quaternary structure, fourteen ClpP subunits assemble into 2 heptameric rings which stack back to back to give a disk-like structure with a central cavity, resembling the structure of eukaryotic proteasomes.

It localises to the cytoplasm. It catalyses the reaction Hydrolysis of proteins to small peptides in the presence of ATP and magnesium. alpha-casein is the usual test substrate. In the absence of ATP, only oligopeptides shorter than five residues are hydrolyzed (such as succinyl-Leu-Tyr-|-NHMec, and Leu-Tyr-Leu-|-Tyr-Trp, in which cleavage of the -Tyr-|-Leu- and -Tyr-|-Trp bonds also occurs).. Functionally, cleaves peptides in various proteins in a process that requires ATP hydrolysis. Has a chymotrypsin-like activity. Plays a major role in the degradation of misfolded proteins. The sequence is that of ATP-dependent Clp protease proteolytic subunit from Alkaliphilus metalliredigens (strain QYMF).